The chain runs to 746 residues: Centromere protein I (746 aa).

A disordered region spans residues 1 to 24 (MATQRVTRNSQQQNRISQGSNSRQ).

It belongs to the CENP-I/CTF3 family. As to quaternary structure, component of the CENPA-CAD complex, composed of CENPI, CENPK, CENPL, CENPO, CENPP, CENPQ, CENPR and CENPS. The CENPA-CAD complex interacts with the CENPA-NAC complex, at least composed of CENPA, CENPC, CENPH, CENPM, CENPN, CENPT and CENPU. Interacts with SENP6. Sumoylated. Sumoylated form can be polyubiquitinated by RNF4, leading to its degradation. Desumoylation by SENP6 prevents its degradation.

It is found in the nucleus. It localises to the chromosome. Its subcellular location is the centromere. Its function is as follows. Component of the CENPA-CAD (nucleosome distal) complex, a complex recruited to centromeres which is involved in assembly of kinetochore proteins, mitotic progression and chromosome segregation. May be involved in incorporation of newly synthesized CENPA into centromeres via its interaction with the CENPA-NAC complex. Required for the localization of CENPF, MAD1L1 and MAD2 (MAD2L1 or MAD2L2) to kinetochores. Involved in the response of gonadal tissues to follicle-stimulating hormone. This chain is Centromere protein I (Cenpi), found in Mus musculus (Mouse).